Consider the following 135-residue polypeptide: Large ribosomal subunit protein uL16c (135 aa).

The protein belongs to the universal ribosomal protein uL16 family. Part of the 50S ribosomal subunit.

It localises to the plastid. The protein resides in the chloroplast. The protein is Large ribosomal subunit protein uL16c of Lotus japonicus (Lotus corniculatus var. japonicus).